Here is a 264-residue protein sequence, read N- to C-terminus: 3-methyl-2-oxobutanoate hydroxymethyltransferase (264 aa).

Mg(2+) is bound by residues Asp-45 and Asp-84. 3-methyl-2-oxobutanoate-binding positions include 45–46 (DS), Asp-84, and Lys-112. Glu-114 serves as a coordination point for Mg(2+). The active-site Proton acceptor is the Glu-181.

It belongs to the PanB family. Homodecamer; pentamer of dimers. Mg(2+) serves as cofactor.

The protein localises to the cytoplasm. It catalyses the reaction 3-methyl-2-oxobutanoate + (6R)-5,10-methylene-5,6,7,8-tetrahydrofolate + H2O = 2-dehydropantoate + (6S)-5,6,7,8-tetrahydrofolate. It functions in the pathway cofactor biosynthesis; (R)-pantothenate biosynthesis; (R)-pantoate from 3-methyl-2-oxobutanoate: step 1/2. Functionally, catalyzes the reversible reaction in which hydroxymethyl group from 5,10-methylenetetrahydrofolate is transferred onto alpha-ketoisovalerate to form ketopantoate. The protein is 3-methyl-2-oxobutanoate hydroxymethyltransferase of Shewanella sp. (strain MR-4).